Here is a 203-residue protein sequence, read N- to C-terminus: 22.3 kDa class VI heat shock protein (203 aa).

The sHSP domain maps to 86 to 203; that stretch reads ALRRGARTTV…DAHQAAAATA (118 aa).

The protein belongs to the small heat shock protein (HSP20) family. In terms of assembly, may form oligomeric structures.

It is found in the cytoplasm. In Oryza sativa subsp. japonica (Rice), this protein is 22.3 kDa class VI heat shock protein (HSP22.3).